The chain runs to 442 residues: Putative helicase 161L (442 aa).

Residues 88 to 241 (IDILEKNHSV…LFPIFFGKEK (154 aa)) form the Helicase ATP-binding domain. 101-108 (CFTGFGKT) lines the ATP pocket. Positions 194-197 (DEVH) match the DEAH box motif.

This sequence belongs to the DEAD box helicase family. DEAH subfamily.

In Invertebrate iridescent virus 6 (IIV-6), this protein is Putative helicase 161L.